The sequence spans 614 residues: Probable pectinesterase/pectinesterase inhibitor 13 (614 aa).

The helical transmembrane segment at 25-45 (IIVGTVSLLVVVAAIVGGAFA) threads the bilayer. Residues 55–102 (QQQQQQQAKNHNKSGSGNNVVKDSDKKSPSPPTPSQKAPVSAAQSVKP) are disordered. 7 N-linked (GlcNAc...) asparagine glycosylation sites follow: asparagine 66, asparagine 128, asparagine 197, asparagine 243, asparagine 301, asparagine 351, and asparagine 367. The interval 103 to 255 (GQGDKIIQTL…QVLTSNSLAL (153 aa)) is pectinesterase inhibitor 13. The pectinesterase 13 stretch occupies residues 301-598 (NATVAKDGSG…YTVGPFLQGD (298 aa)). Positions 376 and 406 each coordinate substrate. Aspartate 429 acts as the Proton donor; for pectinesterase activity in catalysis. Cysteine 443 and cysteine 463 are disulfide-bonded. Catalysis depends on aspartate 450, which acts as the Nucleophile; for pectinesterase activity. Positions 518 and 520 each coordinate substrate. Residues asparagine 522 and asparagine 588 are each glycosylated (N-linked (GlcNAc...) asparagine).

The protein in the N-terminal section; belongs to the PMEI family. In the C-terminal section; belongs to the pectinesterase family. In terms of tissue distribution, expressed in flower buds.

The protein localises to the membrane. The enzyme catalyses [(1-&gt;4)-alpha-D-galacturonosyl methyl ester](n) + n H2O = [(1-&gt;4)-alpha-D-galacturonosyl](n) + n methanol + n H(+). It participates in glycan metabolism; pectin degradation; 2-dehydro-3-deoxy-D-gluconate from pectin: step 1/5. In terms of biological role, acts in the modification of cell walls via demethylesterification of cell wall pectin. This chain is Probable pectinesterase/pectinesterase inhibitor 13 (PME13), found in Arabidopsis thaliana (Mouse-ear cress).